The sequence spans 272 residues: Putative phosphoenolpyruvate synthase regulatory protein (272 aa).

152–159 (GVSRCGKT) lines the ADP pocket.

It belongs to the pyruvate, phosphate/water dikinase regulatory protein family. PSRP subfamily.

The enzyme catalyses [pyruvate, water dikinase] + ADP = [pyruvate, water dikinase]-phosphate + AMP + H(+). The catalysed reaction is [pyruvate, water dikinase]-phosphate + phosphate + H(+) = [pyruvate, water dikinase] + diphosphate. Its function is as follows. Bifunctional serine/threonine kinase and phosphorylase involved in the regulation of the phosphoenolpyruvate synthase (PEPS) by catalyzing its phosphorylation/dephosphorylation. The sequence is that of Putative phosphoenolpyruvate synthase regulatory protein from Pseudomonas fluorescens (strain Pf0-1).